A 332-amino-acid chain; its full sequence is Protein phosphatase PTC7 homolog fig (332 aa).

A PPM-type phosphatase domain is found at lysine 70–valine 325. Aspartate 102, glycine 103, and aspartate 247 together coordinate Mn(2+).

It belongs to the PP2C family. Mg(2+) serves as cofactor. The cofactor is Mn(2+).

The enzyme catalyses O-phospho-L-seryl-[protein] + H2O = L-seryl-[protein] + phosphate. The catalysed reaction is O-phospho-L-threonyl-[protein] + H2O = L-threonyl-[protein] + phosphate. The chain is Protein phosphatase PTC7 homolog fig from Drosophila ananassae (Fruit fly).